The sequence spans 209 residues: uncharacterized protein (209 aa).

Residues S119 and H160 each act as charge relay system in the active site.

Belongs to the peptidase S51 family.

This is an uncharacterized protein from Listeria innocua serovar 6a (strain ATCC BAA-680 / CLIP 11262).